The following is a 140-amino-acid chain: Large ribosomal subunit protein uL11 (140 aa).

It belongs to the universal ribosomal protein uL11 family. As to quaternary structure, part of the ribosomal stalk of the 50S ribosomal subunit. Interacts with L10 and the large rRNA to form the base of the stalk. L10 forms an elongated spine to which L12 dimers bind in a sequential fashion forming a multimeric L10(L12)X complex. In terms of processing, one or more lysine residues are methylated.

Forms part of the ribosomal stalk which helps the ribosome interact with GTP-bound translation factors. The polypeptide is Large ribosomal subunit protein uL11 (Gemmatimonas aurantiaca (strain DSM 14586 / JCM 11422 / NBRC 100505 / T-27)).